Reading from the N-terminus, the 74-residue chain is U3-agatoxin-Ao1f (74 aa).

Positions 1–20 (MRAIISLLLISTMVFGVIEA) are cleaved as a signal peptide. A propeptide spanning residues 21–34 (VSLEEGLKIFEGER) is cleaved from the precursor. Cystine bridges form between Cys-37–Cys-53, Cys-44–Cys-58, Cys-52–Cys-68, and Cys-60–Cys-66. Asn-72 bears the Asparagine amide mark.

It belongs to the neurotoxin 07 (Beta/delta-agtx) family. 03 (aga-4) subfamily. Aga sub-subfamily. In terms of tissue distribution, expressed by the venom gland.

Its subcellular location is the secreted. Functionally, insecticidal neurotoxin that modulates the insect Nav channel (DmNaV1/tipE (para/tipE)) in a unique manner, with both the activation and inactivation processes being affected. The voltage dependence of activation is shifted toward more hyperpolarized potentials (analogous to site 4 toxins) and a non-inactivating persistent sodium current is induced (site 3-like action). Interestingly, both effects take place in a voltage-dependent manner, producing a bell-shaped curve between -80 and 0 mV. In vivo, induces an irreversible spastic paralysis when injected into insects. The chain is U3-agatoxin-Ao1f from Agelena orientalis (Funnel-web spider).